We begin with the raw amino-acid sequence, 289 residues long: Glycine--tRNA ligase alpha subunit (289 aa).

The protein belongs to the class-II aminoacyl-tRNA synthetase family. In terms of assembly, tetramer of two alpha and two beta subunits.

Its subcellular location is the cytoplasm. The catalysed reaction is tRNA(Gly) + glycine + ATP = glycyl-tRNA(Gly) + AMP + diphosphate. The chain is Glycine--tRNA ligase alpha subunit from Nitratidesulfovibrio vulgaris (strain ATCC 29579 / DSM 644 / CCUG 34227 / NCIMB 8303 / VKM B-1760 / Hildenborough) (Desulfovibrio vulgaris).